We begin with the raw amino-acid sequence, 335 residues long: Dolichyl-diphosphooligosaccharide--protein glycosyltransferase subunit MAGT1 (335 aa).

A signal peptide spans 1–29; sequence MASPRWLWCVCATAAVTLLLVSKVPSASA. The Extracellular segment spans residues 30–184; it reads QRKKEKVLVE…DVNIRVIRPP (155 aa). Residues 47-175 enclose the Thioredoxin domain; sequence WTNQRPVIRM…IARWIADRTD (129 aa). An N-linked (GlcNAc...) asparagine glycan is attached at N71. Residues C87 and C90 are joined by a disulfide bond. A helical membrane pass occupies residues 185 to 205; the sequence is NYAGPLMLGLLLAVIGGLVYL. Topologically, residues 206 to 209 are cytoplasmic; sequence RRSN. A helical membrane pass occupies residues 210-230; that stretch reads MEFLFNKTGWAFAALCFVLAM. Over 231 to 270 the chain is Extracellular; it reads TSGQMWNHIRGPPYAHKNPHTGHVNYIHGSSQAQFVAETH. The chain crosses the membrane as a helical span at residues 271-291; sequence IVLLFNGGVTLGMVLLCEAAA. At 292–300 the chain is on the cytoplasmic side; that stretch reads SDMDIGKRR. The helical transmembrane segment at 301–321 threads the bilayer; that stretch reads MMCIAGIGLVVLFFSWMLSIF. Over 322 to 335 the chain is Extracellular; that stretch reads RSKYHGYPYSFLMS.

The protein belongs to the OST3/OST6 family. In terms of assembly, accessory component of the STT3B-containing form of the oligosaccharyltransferase (OST) complex. OST exists in two different complex forms which contain common core subunits RPN1, RPN2, OST48, OST4, DAD1 and TMEM258, either STT3A or STT3B as catalytic subunits, and form-specific accessory subunits. OST can form stable complexes with the Sec61 complex or with both the Sec61 and TRAP complexes. The association of TUSC3 or MAGT1 with the STT3B-containing complex seems to be mutually exclusvice.

Its subcellular location is the cell membrane. The protein localises to the endoplasmic reticulum. It localises to the endoplasmic reticulum membrane. It participates in protein modification; protein glycosylation. Its function is as follows. Accessory component of the STT3B-containing form of the N-oligosaccharyl transferase (OST) complex which catalyzes the transfer of a high mannose oligosaccharide from a lipid-linked oligosaccharide donor to an asparagine residue within an Asn-X-Ser/Thr consensus motif in nascent polypeptide chains. Involved in N-glycosylation of STT3B-dependent substrates. Specifically required for the glycosylation of a subset of acceptor sites that are near cysteine residues; in this function seems to act redundantly with TUSC3. In its oxidized form proposed to form transient mixed disulfides with a glycoprotein substrate to facilitate access of STT3B to the unmodified acceptor site. Also has oxidoreductase-independent functions in the STT3B-containing OST complex possibly involving substrate recognition. Could indirectly play a role in Mg(2+) transport in epithelial cells. The protein is Dolichyl-diphosphooligosaccharide--protein glycosyltransferase subunit MAGT1 of Rattus norvegicus (Rat).